Reading from the N-terminus, the 121-residue chain is Small ribosomal subunit protein uS13 (121 aa).

A disordered region spans residues arginine 92–lysine 121.

It belongs to the universal ribosomal protein uS13 family. As to quaternary structure, part of the 30S ribosomal subunit. Forms a loose heterodimer with protein S19. Forms two bridges to the 50S subunit in the 70S ribosome.

Functionally, located at the top of the head of the 30S subunit, it contacts several helices of the 16S rRNA. In the 70S ribosome it contacts the 23S rRNA (bridge B1a) and protein L5 of the 50S subunit (bridge B1b), connecting the 2 subunits; these bridges are implicated in subunit movement. Contacts the tRNAs in the A and P-sites. The protein is Small ribosomal subunit protein uS13 of Burkholderia thailandensis (strain ATCC 700388 / DSM 13276 / CCUG 48851 / CIP 106301 / E264).